Here is a 1015-residue protein sequence, read N- to C-terminus: MPVDKFLARAGGQRTLSRFQDSLCDFLATGSSRSLCGTSLDFPDRVLVCTEGPAGMEEASSPSFRQATTVEGMVSPEDPTLSKEGLSAKGPPPSPVLPPFRRKCRKCGICPQEEEKSGFSLRFGQRPDGDPPECASPEAFAGPPRLLSSKDTEPGEPGGSWVECAVETEVENMLFSKDGVAPDSLDHLFEFPGLFGGEPLSLVTQEPLQSPALYPEVLTEDSTDQQEVQPAFVVGSPGTPPDPVGPEDKAQSGSRMELEQGLSAPANSCASSPEPLGGLDGAPLEQRRPTHVKKRPWTSPDDSSQDHAEGASKKDFPRLEARVPRGVKTVYYVYTGSGIRLVGAASSSQPGQIEPLEELDTNSARRKRRPTTAHPTPCQSDPSETENAEPHQQRAEDPGEQGMTPLDAGVRSTVVRAMQEVLWTRAQELPDLALREDEVEAIAEGIEEALFHLTQDTNLRYKNKYRSLLFNLRDPRNVDLFLKVAHCDVTPNNLVQMSSIQLAPKELSRWRDQEERKGLDIIEQQQKELYRLPASKLTHKGEVEIPRDLDQMLTLEDLMEPIVPRECSLQPLSTPLEDTTNWHQHHQCDSNCQICTGGEEGRKADDGSQPELQVDISYNVDRKSSTKLPAFSGVIMNREENAIQKAPGPAPASSPEVLKVGETPPKEPQDRLQMPAGLKNAPPSPPPWEGSLDMFSIKHFRAKAQLISGHSCQLVQALPDVIRSAGRLPPSHVWDLLDSMGPSKAKDICVIRLCPHGSRDIQNYRLLYSYLNNKQCHCLATVQQVKMVLLPLPAFEPLPARLRPLGGPGLEITHTSLLLAVLFPKDALPDTATSIPVSNKVPKTVSFSKRVERILYSPEDRRSEATSSPLEEDPKQSLARGSLAPRSVCAPQSFPRGRGRQGPGWGQWSPEAAWCYSQHPSSAGPVFPGIGQGQHLHRASCFHHDLLQHLKVLVTMSHQFQASLWPQSQDSLPPSTVVSAVPDPPGPSLGPMDGGGSNCPPPEGSDPLEPPEHEC.

Disordered regions lie at residues 73-97 (MVSPEDPTLSKEGLSAKGPPPSPVL), 118-159 (GFSL…EPGG), 213-320 (LYPE…PRLE), and 344-406 (AASS…MTPL). The segment covering 304 to 320 (SQDHAEGASKKDFPRLE) has biased composition (basic and acidic residues). Polar residues predominate over residues 373-382 (AHPTPCQSDP). Positions 388–397 (AEPHQQRAED) are enriched in basic and acidic residues. The 121-residue stretch at 410 to 530 (VRSTVVRAMQ…IIEQQQKELY (121 aa)) folds into the TFIIS central domain. The tract at residues 643–685 (IQKAPGPAPASSPEVLKVGETPPKEPQDRLQMPAGLKNAPPSP) is disordered. The SPOC domain occupies 688–791 (WEGSLDMFSI…VQQVKMVLLP (104 aa)). 2 disordered regions span residues 858 to 906 (PEDR…PGWG) and 967 to 1015 (QSQD…EHEC). Positions 967 to 978 (QSQDSLPPSTVV) are enriched in polar residues.

As to quaternary structure, interacts with DNMT3A, DNMT3C and DNMT3L. Interacts with C19orf84 homolog. Interacts with SPIN1; promoting recruitment to transposons marked with histone H3 trimethylated at both 'Lys-4' and 'Lys-9' (H3K4me3K9me3).

The protein localises to the nucleus. It localises to the chromosome. Functionally, protein adapter that acts as an essential executor of PIWIL4-piRNA pathway directed transposon DNA methylation and silencing in the male embryonic germ cells. Recruited to young transposons, which are specifically marked with histone H3 trimethylated at both 'Lys-4' and 'Lys-9' (H3K4me3K9me3), via its association with SPIN1 chromatin reader, and associates with the de novo DNA methylation machinery and repressive chromatin remodeling complexes. Following this, PIWIL4 engages with nascent transposable element transcript to direct piRNA-directed DNA methylation. Not required for piRNA biosynthesis. This chain is SPOC domain-containing protein 1, found in Mus musculus (Mouse).